Consider the following 474-residue polypeptide: uncharacterized protein (474 aa).

Positions 1–14 (MGSRYPSHQLSNGL) are enriched in polar residues. A disordered region spans residues 1–137 (MGSRYPSHQL…QSGGVTRQNS (137 aa)). Ser-45 bears the Phosphoserine mark. Composition is skewed to polar residues over residues 73-83 (RSGSFAGTAQS), 97-113 (SLASAGSVSMKKTNSGP), and 125-137 (SGPQSGGVTRQNS). The residue at position 169 (Ser-169) is a Phosphoserine. 2 helical membrane-spanning segments follow: residues 210-230 (VLWLVVLIFIMGFLAGGFILG) and 236-256 (ILLVVVAILFTVVAALFIWNI).

It localises to the membrane. This is an uncharacterized protein from Arabidopsis thaliana (Mouse-ear cress).